Reading from the N-terminus, the 538-residue chain is Exo-alpha-bergamotene synthase (538 aa).

Mg(2+) is bound by residues aspartate 291, aspartate 295, aspartate 435, threonine 439, and glutamate 443. A DDXXD motif motif is present at residues 291–295 (DDIYD).

It belongs to the terpene synthase family. Mg(2+) serves as cofactor. The cofactor is Mn(2+).

The catalysed reaction is (2E,6E)-farnesyl diphosphate = (1S,5S,6R)-alpha-bergamotene + diphosphate. Its function is as follows. Catalyzes a mixture of sesquiterpenoids from (2E,6E)-farnesyl diphosphate. Catalyzes the formation of exo-alpha-bergamotene, as well as (E)-nerolidol, (Z)-alpha-bisabolene, (E)-beta-farnesene and beta-sesquiphellandrene. Also has activity towards geranyl diphosphate, but to a much lesser extent. This chain is Exo-alpha-bergamotene synthase, found in Lavandula angustifolia (Lavender).